Reading from the N-terminus, the 304-residue chain is Putative ankyrin repeat protein R598 (304 aa).

ANK repeat units follow at residues 7-36 (NIVTDIKNAICKDDLDSFIILMENNPSINL), 77-107 (YISTVLREEVIKNCSVKILKYLFDMGLPVDF), 122-151 (GSNHYIKENPGQDTLSLLRLLIEYGVDVNA), 152-181 (HNYLPLYSAVSSKNFDKVKLLVENGANVLR), 183-209 (ANGNENSFYFKIDSIKYLLDNGVEIDM), 210-239 (NLSRALFLSIKDNSIECIQFYLELGADINK), and 265-293 (FDFTSLNKLAGNNNERIIDVLINEANVDI).

This chain is Putative ankyrin repeat protein R598, found in Acanthamoeba polyphaga (Amoeba).